The chain runs to 83 residues: Small ribosomal subunit protein uS17 (83 aa).

The protein belongs to the universal ribosomal protein uS17 family. As to quaternary structure, part of the 30S ribosomal subunit.

Its function is as follows. One of the primary rRNA binding proteins, it binds specifically to the 5'-end of 16S ribosomal RNA. The sequence is that of Small ribosomal subunit protein uS17 from Campylobacter curvus (strain 525.92).